A 486-amino-acid polypeptide reads, in one-letter code: Achaete-scute complex protein T8 (486 aa).

Disordered regions lie at residues 1-26 and 75-158; these read MAALSFSPSPPPKENPKENPNPGIKT and AAST…LPLP. Over residues 75 to 86 the composition is skewed to polar residues; sequence AASTTNTTPISS. In terms of domain architecture, bHLH spans 159 to 223; sequence QAVARRNARE…RMAVEYIRSL (65 aa).

In terms of assembly, efficient DNA binding requires dimerization with another bHLH protein. In terms of tissue distribution, l(1)SC, SC and AC strongly label the presumptive stomatogastric nervous system, while ASE is more prominent in the presumptive procephalic lobe.

Involved in the determination of the neuronal precursors of optic lobes in the central nervous system. The protein is Achaete-scute complex protein T8 (ase) of Drosophila melanogaster (Fruit fly).